A 159-amino-acid polypeptide reads, in one-letter code: Protein-export protein SecB (159 aa).

Belongs to the SecB family. In terms of assembly, homotetramer, a dimer of dimers. One homotetramer interacts with 1 SecA dimer.

It is found in the cytoplasm. Functionally, one of the proteins required for the normal export of preproteins out of the cell cytoplasm. It is a molecular chaperone that binds to a subset of precursor proteins, maintaining them in a translocation-competent state. It also specifically binds to its receptor SecA. The polypeptide is Protein-export protein SecB (Nitrobacter winogradskyi (strain ATCC 25391 / DSM 10237 / CIP 104748 / NCIMB 11846 / Nb-255)).